A 216-amino-acid polypeptide reads, in one-letter code: Transmembrane protein 139 (216 aa).

The signal sequence occupies residues 1–25; the sequence is MVPMHLLGRLEKPLLLLCCASFLLG. Residues 26 to 34 lie on the Extracellular side of the membrane; sequence LALLGIKTD. Residues 35–55 form a helical membrane-spanning segment; the sequence is ITPVAYFFLTLGGFFLFAYLL. Residues 56–216 are Cytoplasmic-facing; sequence VRFLEWGLRS…VFYEDNWAPP (161 aa). Residues 104 to 163 are disordered; it reads RPQELDQPPPYSTVVIPPAPEEEQPSHPEGSRRAKLEQRRMASEGSMAQEGSPGRAPINL. A compositionally biased stretch (basic and acidic residues) spans 127–145; it reads QPSHPEGSRRAKLEQRRMA. 2 positions are modified to phosphoserine: S146 and S155.

Interacts with isoform 2 of SLC4A1.

The protein resides in the membrane. Functionally, may be involved in cellular trafficking of proteins such as SLC4A1. The sequence is that of Transmembrane protein 139 (TMEM139) from Homo sapiens (Human).